We begin with the raw amino-acid sequence, 901 residues long: HTH-type transcriptional regulator MalT (901 aa).

ATP is bound at residue 39–46 (SPAGYGKT). The 66-residue stretch at 829-894 (ELIRTSPLTQ…AAVQHAQKLL (66 aa)) folds into the HTH luxR-type domain. A DNA-binding region (H-T-H motif) is located at residues 853 to 872 (NEQIAGELEVAATTIKTHIR).

It belongs to the MalT family. Monomer in solution. Oligomerizes to an active state in the presence of the positive effectors ATP and maltotriose.

Its activity is regulated as follows. Activated by ATP and maltotriose, which are both required for DNA binding. In terms of biological role, positively regulates the transcription of the maltose regulon whose gene products are responsible for uptake and catabolism of malto-oligosaccharides. Specifically binds to the promoter region of its target genes, recognizing a short DNA motif called the MalT box. The chain is HTH-type transcriptional regulator MalT from Escherichia coli O139:H28 (strain E24377A / ETEC).